Reading from the N-terminus, the 427-residue chain is Adenylosuccinate synthetase (427 aa).

GTP-binding positions include 12-18 (GDEGKGK) and 40-42 (GHT). The active-site Proton acceptor is the Asp-13. Mg(2+)-binding residues include Asp-13 and Gly-40. IMP contacts are provided by residues 13-16 (DEGK), 38-41 (NAGH), Thr-128, Arg-142, Gln-223, Thr-238, and Arg-302. Catalysis depends on His-41, which acts as the Proton donor. A substrate-binding site is contributed by 298-304 (TTTGRPR). Residues Arg-304, 330-332 (SID), and 412-414 (SVG) contribute to the GTP site.

It belongs to the adenylosuccinate synthetase family. As to quaternary structure, homodimer. It depends on Mg(2+) as a cofactor.

The protein localises to the cytoplasm. The enzyme catalyses IMP + L-aspartate + GTP = N(6)-(1,2-dicarboxyethyl)-AMP + GDP + phosphate + 2 H(+). It functions in the pathway purine metabolism; AMP biosynthesis via de novo pathway; AMP from IMP: step 1/2. Functionally, plays an important role in the de novo pathway of purine nucleotide biosynthesis. Catalyzes the first committed step in the biosynthesis of AMP from IMP. This Staphylococcus aureus (strain MW2) protein is Adenylosuccinate synthetase.